We begin with the raw amino-acid sequence, 644 residues long: 3D-(3,5/4)-trihydroxycyclohexane-1,2-dione hydrolase (644 aa).

Residue Glu65 participates in thiamine diphosphate binding. The thiamine pyrophosphate binding stretch occupies residues 442–522 (SLPGDLQRMW…INVLLFDNSG (81 aa)). Mg(2+) is bound by residues Asp493 and Asn520.

The protein belongs to the TPP enzyme family. Requires Mg(2+) as cofactor. Thiamine diphosphate serves as cofactor.

The catalysed reaction is 3D-3,5/4-trihydroxycyclohexane-1,2-dione + H2O = 5-deoxy-D-glucuronate + H(+). It functions in the pathway polyol metabolism; myo-inositol degradation into acetyl-CoA; acetyl-CoA from myo-inositol: step 3/7. Involved in the cleavage of the C1-C2 bond of 3D-(3,5/4)-trihydroxycyclohexane-1,2-dione (THcHDO) to yield 5-deoxy-glucuronate (5DG). The sequence is that of 3D-(3,5/4)-trihydroxycyclohexane-1,2-dione hydrolase from Bacillus anthracis (strain A0248).